The following is a 338-amino-acid chain: Glyceraldehyde-3-phosphate dehydrogenase GAPC2, cytosolic (338 aa).

NAD(+) is bound by residues 15–16, Asp-37, and Arg-84; that span reads RI. Position 155–157 (155–157) interacts with D-glyceraldehyde 3-phosphate; it reads SCT. Catalysis depends on Cys-156, which acts as the Nucleophile. Cys-156 carries the post-translational modification S-glutathionyl cysteine; transient; alternate. An S-nitrosocysteine; transient; alternate modification is found at Cys-156. Cys-160 carries the post-translational modification S-nitrosocysteine; transient. Residues Thr-186, 215–216, and Arg-238 each bind D-glyceraldehyde 3-phosphate; that span reads TG. Position 320 (Asn-320) interacts with NAD(+).

It belongs to the glyceraldehyde-3-phosphate dehydrogenase family. As to quaternary structure, homotetramer. Interacts with PLDDELTA. Binds to DPB3-1/NF-YC10 in response to heat-stress; this interaction promotes DPB3-1/NF-YC10 DNA-binding ability to its target promoter. In terms of processing, S-glutathionylation at Cys-156 in the presence of oxidized glutathione (GSSG). S-nitrosylation at Cys-156 and Cys-160 in the presence of S-nitrosoglutathione (GSNO) or sodium nitroprusside (SNP). These reactions may be both a protective mechanism against irreversible oxidation and a mean to store inhibited enzyme in a recoverable form.

The protein resides in the cytoplasm. Its subcellular location is the nucleus. The enzyme catalyses D-glyceraldehyde 3-phosphate + phosphate + NAD(+) = (2R)-3-phospho-glyceroyl phosphate + NADH + H(+). The protein operates within carbohydrate degradation; glycolysis; pyruvate from D-glyceraldehyde 3-phosphate: step 1/5. Its activity is regulated as follows. Inhibition by oxidized glutathione (GSSG), S-nitrosoglutathione (GSNO) and hydrogen peroxide. Key enzyme in glycolysis that catalyzes the first step of the pathway by converting D-glyceraldehyde 3-phosphate (G3P) into 3-phospho-D-glyceroyl phosphate. Essential for the maintenance of cellular ATP levels and carbohydrate metabolism. Binds DNA in vitro. Together with DNA polymerase II subunit B3-1 (DPB3-1) and GAPC1, enhances heat tolerance and promotes the expression of heat-inducible genes. This is Glyceraldehyde-3-phosphate dehydrogenase GAPC2, cytosolic from Arabidopsis thaliana (Mouse-ear cress).